The sequence spans 938 residues: Probable glutamyl endopeptidase, chloroplastic (938 aa).

The transit peptide at 1–54 (MSSLTILLQRACLRFALLPVPPLRAPLRPPRRPLGLPRRSAMSSSAASRLSHIV) directs the protein to the chloroplast. Over residues 58–76 (GGAAGESSEPPAAAAAASG) the composition is skewed to low complexity. Residues 58–77 (GGAAGESSEPPAAAAAASGL) are disordered. Active-site charge relay system residues include serine 762, aspartate 836, and histidine 870. The span at 897–913 (SSKTDSDSVADTENKTV) shows a compositional bias: polar residues. The disordered stretch occupies residues 897 to 938 (SSKTDSDSVADTENKTVSASGGGAPCEGPEAEGFSSMQRSLL).

Belongs to the peptidase S9D family.

It localises to the plastid. The protein localises to the chloroplast stroma. In terms of biological role, serine-type protease active in vitro against the LHCII N-terminal. Cleaves its substrate on the carboxy-side of Glu residues. The chain is Probable glutamyl endopeptidase, chloroplastic (GEP) from Oryza sativa subsp. japonica (Rice).